Reading from the N-terminus, the 301-residue chain is Sulfate adenylyltransferase subunit 2 (301 aa).

The tract at residues 282–301 (RLIDRDEAGSMEKKKREGYF) is disordered.

It belongs to the PAPS reductase family. CysD subfamily. In terms of assembly, heterodimer composed of CysD, the smaller subunit, and CysN.

The catalysed reaction is sulfate + ATP + H(+) = adenosine 5'-phosphosulfate + diphosphate. Its pathway is sulfur metabolism; hydrogen sulfide biosynthesis; sulfite from sulfate: step 1/3. With CysN forms the ATP sulfurylase (ATPS) that catalyzes the adenylation of sulfate producing adenosine 5'-phosphosulfate (APS) and diphosphate, the first enzymatic step in sulfur assimilation pathway. APS synthesis involves the formation of a high-energy phosphoric-sulfuric acid anhydride bond driven by GTP hydrolysis by CysN coupled to ATP hydrolysis by CysD. This chain is Sulfate adenylyltransferase subunit 2, found in Chelativorans sp. (strain BNC1).